A 98-amino-acid polypeptide reads, in one-letter code: NADH-ubiquinone oxidoreductase chain 4L (98 aa).

3 helical membrane passes run 1-21, 28-48, and 59-79; these read MMSINLNLIMAFSLALAGVLI, STLLCLEGMMLSLFILMALII, and APLILLVFSACEAGVGLALLV.

This sequence belongs to the complex I subunit 4L family. Core subunit of respiratory chain NADH dehydrogenase (Complex I) which is composed of 45 different subunits.

It localises to the mitochondrion inner membrane. It carries out the reaction a ubiquinone + NADH + 5 H(+)(in) = a ubiquinol + NAD(+) + 4 H(+)(out). In terms of biological role, core subunit of the mitochondrial membrane respiratory chain NADH dehydrogenase (Complex I) which catalyzes electron transfer from NADH through the respiratory chain, using ubiquinone as an electron acceptor. Part of the enzyme membrane arm which is embedded in the lipid bilayer and involved in proton translocation. This Lagostrophus fasciatus (Banded hare-wallaby) protein is NADH-ubiquinone oxidoreductase chain 4L (MT-ND4L).